A 445-amino-acid chain; its full sequence is Methylenetetrahydrofolate--tRNA-(uracil-5-)-methyltransferase TrmFO (445 aa).

9–14 (GGGLAG) contributes to the FAD binding site.

The protein belongs to the MnmG family. TrmFO subfamily. Requires FAD as cofactor.

The protein localises to the cytoplasm. The catalysed reaction is uridine(54) in tRNA + (6R)-5,10-methylene-5,6,7,8-tetrahydrofolate + NADH + H(+) = 5-methyluridine(54) in tRNA + (6S)-5,6,7,8-tetrahydrofolate + NAD(+). It carries out the reaction uridine(54) in tRNA + (6R)-5,10-methylene-5,6,7,8-tetrahydrofolate + NADPH + H(+) = 5-methyluridine(54) in tRNA + (6S)-5,6,7,8-tetrahydrofolate + NADP(+). Catalyzes the folate-dependent formation of 5-methyl-uridine at position 54 (M-5-U54) in all tRNAs. The sequence is that of Methylenetetrahydrofolate--tRNA-(uracil-5-)-methyltransferase TrmFO from Rhizorhabdus wittichii (strain DSM 6014 / CCUG 31198 / JCM 15750 / NBRC 105917 / EY 4224 / RW1) (Sphingomonas wittichii).